An 88-amino-acid polypeptide reads, in one-letter code: Small ribosomal subunit protein bS20 (88 aa).

Residues 1 to 27 (MANSKSAKKRALQSEKRRQHNASRRSM) are disordered.

The protein belongs to the bacterial ribosomal protein bS20 family.

Its function is as follows. Binds directly to 16S ribosomal RNA. The polypeptide is Small ribosomal subunit protein bS20 (Shewanella baltica (strain OS223)).